Reading from the N-terminus, the 284-residue chain is Diaminopimelate epimerase (284 aa).

Substrate is bound by residues Asn-14 and Asn-67. The active-site Proton donor is the Cys-76. Residues 77-78, Asn-166, Asn-199, and 217-218 contribute to the substrate site; these read GN and ER. Cys-226 functions as the Proton acceptor in the catalytic mechanism. 227–228 serves as a coordination point for substrate; it reads GT.

This sequence belongs to the diaminopimelate epimerase family. In terms of assembly, homodimer.

Its subcellular location is the cytoplasm. It carries out the reaction (2S,6S)-2,6-diaminopimelate = meso-2,6-diaminopimelate. It participates in amino-acid biosynthesis; L-lysine biosynthesis via DAP pathway; DL-2,6-diaminopimelate from LL-2,6-diaminopimelate: step 1/1. Functionally, catalyzes the stereoinversion of LL-2,6-diaminopimelate (L,L-DAP) to meso-diaminopimelate (meso-DAP), a precursor of L-lysine and an essential component of the bacterial peptidoglycan. This is Diaminopimelate epimerase from Bacillus velezensis (strain DSM 23117 / BGSC 10A6 / LMG 26770 / FZB42) (Bacillus amyloliquefaciens subsp. plantarum).